The sequence spans 526 residues: Zinc finger protein 69 homolog (526 aa).

The SCAN box domain occupies 1–39 (MPQQLLITLPTEASTWVKLQHPKKAVEGAPLWEDVTKMF). The KRAB domain occupies 76–147 (LTFKDISIDF…EKEGPGDPSS (72 aa)). 9 C2H2-type zinc fingers span residues 271 to 293 (YECNICEKIFKQPIHLTEHMRIH), 299 to 321 (FRCKECGRAFSQSASLSTHQRIH), 327 to 349 (FECEECGKAFRHRSSLNQHHRTH), 355 to 377 (YVCDKCQKAFSQNISLVQHLRTH), 383 to 405 (FTCNECGKTFRQIRHLSEHIRIH), 411 to 433 (YACTACCKTFSHRAYLTHHQRIH), 439 to 461 (YKCKECGKAFRQRIHLSNHKTVH), 467 to 489 (YECNRCGKAYRHDSSFKKHQRHH), and 495 to 517 (YECNECGKAFSYNSSLSRHHEIH).

The protein belongs to the krueppel C2H2-type zinc-finger protein family. As to expression, expressed in visceral and subcutaneous adipose tissue.

The protein resides in the nucleus. Putative transcription factor that appears to regulate lipid metabolism. The chain is Zinc finger protein 69 homolog (ZFP69) from Homo sapiens (Human).